The primary structure comprises 306 residues: Methionyl-tRNA formyltransferase (306 aa).

110–113 is a (6S)-5,6,7,8-tetrahydrofolate binding site; the sequence is SLLP.

The protein belongs to the Fmt family.

It catalyses the reaction L-methionyl-tRNA(fMet) + (6R)-10-formyltetrahydrofolate = N-formyl-L-methionyl-tRNA(fMet) + (6S)-5,6,7,8-tetrahydrofolate + H(+). Attaches a formyl group to the free amino group of methionyl-tRNA(fMet). The formyl group appears to play a dual role in the initiator identity of N-formylmethionyl-tRNA by promoting its recognition by IF2 and preventing the misappropriation of this tRNA by the elongation apparatus. The chain is Methionyl-tRNA formyltransferase from Brucella suis biovar 1 (strain 1330).